The chain runs to 806 residues: Leucine--tRNA ligase (806 aa).

The 'HIGH' region signature appears at Pro-40–His-51. The 'KMSKS' region signature appears at Lys-580 to Ser-584. Lys-583 lines the ATP pocket.

The protein belongs to the class-I aminoacyl-tRNA synthetase family.

It localises to the cytoplasm. The enzyme catalyses tRNA(Leu) + L-leucine + ATP = L-leucyl-tRNA(Leu) + AMP + diphosphate. The protein is Leucine--tRNA ligase of Ureaplasma parvum serovar 3 (strain ATCC 27815 / 27 / NCTC 11736).